The sequence spans 480 residues: Pyruvate kinase II (480 aa).

Arg-36 provides a ligand contact to substrate. K(+)-binding residues include Asn-38, Ser-40, and Asp-70. Position 38 to 41 (38 to 41 (NFSH)) interacts with ATP. Positions 77 and 160 each coordinate ATP. Position 223 (Lys-223) interacts with substrate. Position 225 (Glu-225) interacts with Mg(2+). Substrate contacts are provided by Gly-251, Asp-252, and Thr-284. A Mg(2+)-binding site is contributed by Asp-252.

This sequence belongs to the pyruvate kinase family. Homotetramer. Mg(2+) serves as cofactor. K(+) is required as a cofactor.

It catalyses the reaction pyruvate + ATP = phosphoenolpyruvate + ADP + H(+). It functions in the pathway carbohydrate degradation; glycolysis; pyruvate from D-glyceraldehyde 3-phosphate: step 5/5. Its activity is regulated as follows. Allosterically activated by AMP and by several sugar phosphates. Belongs to type II PK. In terms of biological role, catalyzes the formation of pyruvate in the last step of glycolysis, it is irreversible under physiological conditions. The reaction is critical for the control of metabolic flux in the second part of glycolysis. The chain is Pyruvate kinase II (pykA) from Salmonella typhimurium (strain LT2 / SGSC1412 / ATCC 700720).